Here is a 146-residue protein sequence, read N- to C-terminus: Lysozyme-like protein 4 (146 aa).

The N-terminal stretch at 1–19 (MKASVVLSLLGYLVVPSGA) is a signal peptide. Positions 20–146 (YILGRCTVAK…LARWLDGCKL (127 aa)) constitute a C-type lysozyme domain. 4 disulfides stabilise this stretch: cysteine 25/cysteine 144, cysteine 49/cysteine 131, cysteine 84/cysteine 96, and cysteine 92/cysteine 110. The active site involves glutamate 54.

Belongs to the glycosyl hydrolase 22 family. As to quaternary structure, monomer. Expressed in testis and epididymis.

Its subcellular location is the secreted. It localises to the cytoplasmic vesicle. It is found in the secretory vesicle. The protein resides in the acrosome. The protein localises to the cell projection. Its subcellular location is the cilium. It localises to the flagellum. In terms of biological role, may be involved in fertilization. Has no detectable bacteriolytic and lysozyme activities in vitro. The protein is Lysozyme-like protein 4 (LYZL4) of Homo sapiens (Human).